A 144-amino-acid chain; its full sequence is NADH dehydrogenase [ubiquinone] 1 alpha subcomplex subunit 13 (144 aa).

Ala-2 is modified (N-acetylalanine). A helical transmembrane segment spans residues 30–51; the sequence is LSGYSMLAIGIGTLIYGHWSIM. Positions 102–144 are important for inducing cell death; it reads PDWKVGESVFHTTRWVPPLIGELYGLRTTEEALHASHGFMWYT.

It belongs to the complex I NDUFA13 subunit family. Complex I is composed of 45 different subunits. Interacts with CARD15, but not with CARD4. Interacts with STAT3, but not with STAT1, STAT2 and STAT5A. Interacts with OLFM4. In terms of assembly, (Microbial infection) Interacts with HHV-8 IRF1, in the nucleus, with HPV-16 E6 and SV40 LT. Widely expressed, with highest expression in heart, skeletal muscle, liver, kidney and placenta. In intestinal mucosa, down-regulated in areas involved in Crohn disease and ulcerative colitis.

The protein resides in the mitochondrion inner membrane. Its subcellular location is the nucleus. Its function is as follows. Accessory subunit of the mitochondrial membrane respiratory chain NADH dehydrogenase (Complex I), that is believed not to be involved in catalysis. Complex I functions in the transfer of electrons from NADH to the respiratory chain. The immediate electron acceptor for the enzyme is believed to be ubiquinone. Involved in the interferon/all-trans-retinoic acid (IFN/RA) induced cell death. This apoptotic activity is inhibited by interaction with viral IRF1. Prevents the transactivation of STAT3 target genes. May play a role in CARD15-mediated innate mucosal responses and serve to regulate intestinal epithelial cell responses to microbes. The protein is NADH dehydrogenase [ubiquinone] 1 alpha subcomplex subunit 13 (NDUFA13) of Homo sapiens (Human).